The following is a 320-amino-acid chain: MRSAQVYRWQIPMDAGVVLRDRRLKTRDGLYVCLREGEREGWGEISPLPGFSQETWEEAQSVLLAWVNNWLAGDCELPQMPSVAFGVSCALAELTDALPQAANYRAAPLCNGDPDDLILKLADMPGEKVAKVKVGLYEAVRDGMVVNLLLEAIPDLHLRLDANRAWTPLKGQQFAKYVNPDYRHRIAFLEEPCKTRDDSRAFARETGIAIAWDESLREPDFAFVAEEGVRAVVIKPTLTGSLDKVREQVKAAHALGLTAVISSSIESSLGLTQLARIAAWLTPDTIPGLDTLDLMQVQQVRRWPGSPLPLVDVDALERLL.

Catalysis depends on Lys133, which acts as the Proton donor. Mg(2+) is bound by residues Asp161, Glu190, and Asp213. Lys235 (proton acceptor) is an active-site residue.

The protein belongs to the mandelate racemase/muconate lactonizing enzyme family. MenC type 1 subfamily. The cofactor is a divalent metal cation.

It catalyses the reaction (1R,6R)-6-hydroxy-2-succinyl-cyclohexa-2,4-diene-1-carboxylate = 2-succinylbenzoate + H2O. It functions in the pathway quinol/quinone metabolism; 1,4-dihydroxy-2-naphthoate biosynthesis; 1,4-dihydroxy-2-naphthoate from chorismate: step 4/7. Its pathway is quinol/quinone metabolism; menaquinone biosynthesis. Converts 2-succinyl-6-hydroxy-2,4-cyclohexadiene-1-carboxylate (SHCHC) to 2-succinylbenzoate (OSB). The chain is o-succinylbenzoate synthase from Escherichia coli O7:K1 (strain IAI39 / ExPEC).